A 317-amino-acid polypeptide reads, in one-letter code: MSYSSNTKNELARIEGEQSCCVRAELAALIRMSGTLQLVGSQKLNIKVTTENPAIARRLFKIIKKQYNIHAEVMIRRNARLKKNNYYLLVITHSMGSSEVLADLGIMKKVDDSFDITYRIPQELTQNRCCKRAYLRGAFLGGGSVSDPEKTYHLEFVTHHKELSEGLRDLINSFDLNAKVVERKGNYVVYLKEGDQVVDLLNIVGAHSALLDLENIRVYKEMRNNVNRIVNCETANLSKTVDASIRQIQNIQYIEGSIGINRLPDNLREVAELRVEYQDATLKELGEMINPPIGKSGVNHRLRKLDQIADRERGKSI.

Positions 281-314 form a DNA-binding region, H-T-H motif; it reads TLKELGEMINPPIGKSGVNHRLRKLDQIADRERG.

Belongs to the WhiA family.

Functionally, involved in cell division and chromosome segregation. The chain is Probable cell division protein WhiA from Alkaliphilus metalliredigens (strain QYMF).